We begin with the raw amino-acid sequence, 183 residues long: UPF0398 protein PEPE_0933 (183 aa).

The protein belongs to the UPF0398 family.

This chain is UPF0398 protein PEPE_0933, found in Pediococcus pentosaceus (strain ATCC 25745 / CCUG 21536 / LMG 10740 / 183-1w).